The sequence spans 188 residues: Adenine phosphoribosyltransferase (188 aa).

This sequence belongs to the purine/pyrimidine phosphoribosyltransferase family. In terms of assembly, homodimer.

Its subcellular location is the cytoplasm. It carries out the reaction AMP + diphosphate = 5-phospho-alpha-D-ribose 1-diphosphate + adenine. The protein operates within purine metabolism; AMP biosynthesis via salvage pathway; AMP from adenine: step 1/1. Catalyzes a salvage reaction resulting in the formation of AMP, that is energically less costly than de novo synthesis. In Burkholderia vietnamiensis (strain G4 / LMG 22486) (Burkholderia cepacia (strain R1808)), this protein is Adenine phosphoribosyltransferase.